The primary structure comprises 238 residues: Putative type I specificity subunit S.MpnORF201P (238 aa).

The protein belongs to the type-I restriction system S methylase family. In terms of assembly, the methyltransferase is composed of M and S polypeptides.

Its function is as follows. The specificity (S) subunit of a type I methyltransferase (MTase); this subunit dictates DNA sequence specificity. The single R subunit has multiple frameshifts and is probably not expressed. The sequence is that of Putative type I specificity subunit S.MpnORF201P from Mycoplasma pneumoniae (strain ATCC 29342 / M129 / Subtype 1) (Mycoplasmoides pneumoniae).